A 297-amino-acid chain; its full sequence is 4-hydroxy-tetrahydrodipicolinate synthase (297 aa).

T47 contributes to the pyruvate binding site. Y136 serves as the catalytic Proton donor/acceptor. K165 (schiff-base intermediate with substrate) is an active-site residue. Pyruvate is bound at residue I206.

It belongs to the DapA family. In terms of assembly, homotetramer; dimer of dimers.

The protein localises to the cytoplasm. The enzyme catalyses L-aspartate 4-semialdehyde + pyruvate = (2S,4S)-4-hydroxy-2,3,4,5-tetrahydrodipicolinate + H2O + H(+). It functions in the pathway amino-acid biosynthesis; L-lysine biosynthesis via DAP pathway; (S)-tetrahydrodipicolinate from L-aspartate: step 3/4. In terms of biological role, catalyzes the condensation of (S)-aspartate-beta-semialdehyde [(S)-ASA] and pyruvate to 4-hydroxy-tetrahydrodipicolinate (HTPA). The sequence is that of 4-hydroxy-tetrahydrodipicolinate synthase from Campylobacter concisus (strain 13826).